The following is a 688-amino-acid chain: Methionine--tRNA ligase (688 aa).

The 'HIGH' region signature appears at 13–23; the sequence is PYANGPIHIGH. The Zn(2+) site is built by Cys-144, Cys-147, Cys-157, and Cys-160. A 'KMSKS' region motif is present at residues 334-338; the sequence is KMSKS. Lys-337 provides a ligand contact to ATP. A tRNA-binding domain is found at 582 to 688; the sequence is DFAKIDLRVA…AGAVPGMRVR (107 aa).

Belongs to the class-I aminoacyl-tRNA synthetase family. MetG type 1 subfamily. Homodimer. The cofactor is Zn(2+).

Its subcellular location is the cytoplasm. It carries out the reaction tRNA(Met) + L-methionine + ATP = L-methionyl-tRNA(Met) + AMP + diphosphate. Its function is as follows. Is required not only for elongation of protein synthesis but also for the initiation of all mRNA translation through initiator tRNA(fMet) aminoacylation. This chain is Methionine--tRNA ligase, found in Ralstonia nicotianae (strain ATCC BAA-1114 / GMI1000) (Ralstonia solanacearum).